The following is a 165-amino-acid chain: Ribosomal RNA large subunit methyltransferase H (165 aa).

Glycine 109 contacts S-adenosyl-L-methionine.

This sequence belongs to the RNA methyltransferase RlmH family. In terms of assembly, homodimer.

The protein localises to the cytoplasm. It carries out the reaction pseudouridine(1915) in 23S rRNA + S-adenosyl-L-methionine = N(3)-methylpseudouridine(1915) in 23S rRNA + S-adenosyl-L-homocysteine + H(+). Its function is as follows. Specifically methylates the pseudouridine at position 1915 (m3Psi1915) in 23S rRNA. This is Ribosomal RNA large subunit methyltransferase H from Methylorubrum populi (strain ATCC BAA-705 / NCIMB 13946 / BJ001) (Methylobacterium populi).